The following is a 338-amino-acid chain: MKVFYDKDCDLSLIKGKNVAIIGYGSQGHAHAQNLNDSGCKVTVGLRKGGASWDKVKNAGLNVAEVNDAVKAADVIMILLPDENIAQVYNENVAPHAKQGAVLAFAHGFNVHYGQVVPRADLDVIMIAPKAPGHTVRGTYSQGGGVPHLIAVYQDKSGVARDIALSYAMANGGGRAGIIETNFREETETDLFGEQAVLCGGAVELIKAGFETLTEAGYAPEMAYFECLHELKLIVDLIYEGGIANMNYSISNNAEYGEYVTGPRIVTEDTKNAMRQCLKDIQTGEYAKSFILENKAGAPTLISRRRLNAEHDIEQVGAKLRAMMPWIAKNKLVDQSKN.

The KARI N-terminal Rossmann domain occupies 1-181 (MKVFYDKDCD…GGGRAGIIET (181 aa)). NADP(+) is bound by residues 24 to 27 (YGSQ), R47, and S52. The active site involves H107. G133 serves as a coordination point for NADP(+). A KARI C-terminal knotted domain is found at 182–327 (NFREETETDL…AKLRAMMPWI (146 aa)). D190, E194, E226, and E230 together coordinate Mg(2+). S251 is a binding site for substrate.

This sequence belongs to the ketol-acid reductoisomerase family. It depends on Mg(2+) as a cofactor.

The catalysed reaction is (2R)-2,3-dihydroxy-3-methylbutanoate + NADP(+) = (2S)-2-acetolactate + NADPH + H(+). It catalyses the reaction (2R,3R)-2,3-dihydroxy-3-methylpentanoate + NADP(+) = (S)-2-ethyl-2-hydroxy-3-oxobutanoate + NADPH + H(+). It participates in amino-acid biosynthesis; L-isoleucine biosynthesis; L-isoleucine from 2-oxobutanoate: step 2/4. It functions in the pathway amino-acid biosynthesis; L-valine biosynthesis; L-valine from pyruvate: step 2/4. Functionally, involved in the biosynthesis of branched-chain amino acids (BCAA). Catalyzes an alkyl-migration followed by a ketol-acid reduction of (S)-2-acetolactate (S2AL) to yield (R)-2,3-dihydroxy-isovalerate. In the isomerase reaction, S2AL is rearranged via a Mg-dependent methyl migration to produce 3-hydroxy-3-methyl-2-ketobutyrate (HMKB). In the reductase reaction, this 2-ketoacid undergoes a metal-dependent reduction by NADPH to yield (R)-2,3-dihydroxy-isovalerate. This is Ketol-acid reductoisomerase (NADP(+)) from Herminiimonas arsenicoxydans.